We begin with the raw amino-acid sequence, 227 residues long: Ubiquitin domain-containing protein 1 (227 aa).

Over residues 1–14 the composition is skewed to basic and acidic residues; the sequence is MGGCVGRERAETRG. Positions 1 to 45 are disordered; sequence MGGCVGRERAETRGRGSRTQRKRGGRNEPLKKDKPKWKSDYPMTE. Residues 15–24 show a composition bias toward basic residues; sequence RGSRTQRKRG. A compositionally biased stretch (basic and acidic residues) spans 25–39; sequence GRNEPLKKDKPKWKS. The region spanning 150–225 is the Ubiquitin-like domain; that stretch reads FQLKVRLSTG…IQVIVNQPAP (76 aa).

Functionally, may be involved in the regulation of cellular senescence through a positive feedback loop with TP53. This is Ubiquitin domain-containing protein 1 (ubtd1) from Danio rerio (Zebrafish).